Consider the following 165-residue polypeptide: Large ribosomal subunit protein uL10 (165 aa).

The protein belongs to the universal ribosomal protein uL10 family. As to quaternary structure, part of the ribosomal stalk of the 50S ribosomal subunit. The N-terminus interacts with L11 and the large rRNA to form the base of the stalk. The C-terminus forms an elongated spine to which L12 dimers bind in a sequential fashion forming a multimeric L10(L12)X complex.

Functionally, forms part of the ribosomal stalk, playing a central role in the interaction of the ribosome with GTP-bound translation factors. In Buchnera aphidicola subsp. Acyrthosiphon pisum (strain 5A), this protein is Large ribosomal subunit protein uL10.